The primary structure comprises 479 residues: Adenosylhomocysteinase (479 aa).

The substrate site is built by threonine 65, aspartate 145, and glutamate 205. Threonine 206–threonine 208 is an NAD(+) binding site. Substrate contacts are provided by lysine 235 and aspartate 239. NAD(+)-binding positions include asparagine 240, glycine 269–glycine 274, glutamate 292, asparagine 327, isoleucine 348–histidine 350, and asparagine 393.

Belongs to the adenosylhomocysteinase family. NAD(+) serves as cofactor.

Its subcellular location is the cytoplasm. It carries out the reaction S-adenosyl-L-homocysteine + H2O = L-homocysteine + adenosine. Its pathway is amino-acid biosynthesis; L-homocysteine biosynthesis; L-homocysteine from S-adenosyl-L-homocysteine: step 1/1. May play a key role in the regulation of the intracellular concentration of adenosylhomocysteine. In Herminiimonas arsenicoxydans, this protein is Adenosylhomocysteinase.